We begin with the raw amino-acid sequence, 182 residues long: Sec-independent protein translocase protein TatB (182 aa).

Residues 1–21 (MFDIGFSELLLVFVIGLIVLG) traverse the membrane as a helical segment. Disordered regions lie at residues 87 to 107 (QAAESMKRTYSANDPEQASDE) and 121 to 182 (TQHE…SDKP). A compositionally biased stretch (low complexity) spans 168 to 182 (AAPVVESSPSSSDKP).

This sequence belongs to the TatB family. The Tat system comprises two distinct complexes: a TatABC complex, containing multiple copies of TatA, TatB and TatC subunits, and a separate TatA complex, containing only TatA subunits. Substrates initially bind to the TatABC complex, which probably triggers association of the separate TatA complex to form the active translocon.

The protein localises to the cell inner membrane. In terms of biological role, part of the twin-arginine translocation (Tat) system that transports large folded proteins containing a characteristic twin-arginine motif in their signal peptide across membranes. Together with TatC, TatB is part of a receptor directly interacting with Tat signal peptides. TatB may form an oligomeric binding site that transiently accommodates folded Tat precursor proteins before their translocation. The protein is Sec-independent protein translocase protein TatB of Salmonella choleraesuis (strain SC-B67).